The sequence spans 577 residues: Probable ATP-dependent RNA helicase DDX55 homolog (577 aa).

Residues 7 to 37 (AVATKTYREKLGPEILEVFDKSYKSFTDVQV) carry the Q motif motif. The Helicase ATP-binding domain maps to 40–218 (GTHLLNLSDV…VFGLRNAKQV (179 aa)). Residue 53-60 (SPTGSGKT) participates in ATP binding. A DEAD box motif is present at residues 166-169 (DEAD). Residues 231–393 (TLKNYFVECP…EVKVPTSTSR (163 aa)) enclose the Helicase C-terminal domain. Residues 508 to 577 (AKEKKRREKE…LSKKEIKDVL (70 aa)) are disordered. Residues 510-530 (EKKRREKEARKMKRAGGRFKS) are compositionally biased toward basic residues.

The protein belongs to the DEAD box helicase family. DDX55/SPB4 subfamily.

It carries out the reaction ATP + H2O = ADP + phosphate + H(+). Its function is as follows. Probable ATP-binding RNA helicase. The chain is Probable ATP-dependent RNA helicase DDX55 homolog from Caenorhabditis briggsae.